The primary structure comprises 564 residues: MPEADIKPRSRDVTDGLEKAAARGMLRAVGMVDEDFAKAQIGVASSWNEITPCNLSLDRLAKSVKEGVFAAGGYPLEFGTISVSDGISMGHEGMHFSLVSREVIADSVETVMQAERLDGSVLLAGCDKSLPGMLMAAARLDLASVFLYAGSILPGVAKLSDGSEREVTIIDAFEAVGACSRGLMSRADVDAIERAICPGEGACGGMYTANTMASAAEALGMSLPGSAAPPATDRRRDGFARQSGQAVIELLRQGITARDIMTREAFENAIAVVMAFGGSTNAVLHLLAIAHEANVELTLDDFSRIGSKVPHLADVKPFGRHVMSHVDHIGGVPVVMKTLLDAGLLHGDCLTVTGRTVAENLEAIAPPDPDGKVLRALINPIHATGGITILRGSLAPEGAVVKTAGLDTDVFEGTARVFDGERAALDALEDGTITHGDVVVIRYEGPKGGPGMREMLAITGAIKGAGLGKDVLLLTDGRFSGGTTGFCVGHIAPEAVDAGPIAFVRDGDRIRLDVAGRTLDVLTDPPEFAARQQNFTPPAPRYKTGVLAKYVKLVGSAAIGAVCG.

[2Fe-2S] cluster is bound at residue C53. D85 is a binding site for Mg(2+). C126 serves as a coordination point for [2Fe-2S] cluster. Residues D127 and K128 each coordinate Mg(2+). K128 bears the N6-carboxylysine mark. C203 provides a ligand contact to [2Fe-2S] cluster. E454 provides a ligand contact to Mg(2+). S480 acts as the Proton acceptor in catalysis.

The protein belongs to the IlvD/Edd family. Homodimer. [2Fe-2S] cluster is required as a cofactor. It depends on Mg(2+) as a cofactor.

It catalyses the reaction (2R)-2,3-dihydroxy-3-methylbutanoate = 3-methyl-2-oxobutanoate + H2O. It carries out the reaction (2R,3R)-2,3-dihydroxy-3-methylpentanoate = (S)-3-methyl-2-oxopentanoate + H2O. The protein operates within amino-acid biosynthesis; L-isoleucine biosynthesis; L-isoleucine from 2-oxobutanoate: step 3/4. Its pathway is amino-acid biosynthesis; L-valine biosynthesis; L-valine from pyruvate: step 3/4. Its function is as follows. Functions in the biosynthesis of branched-chain amino acids. Catalyzes the dehydration of (2R,3R)-2,3-dihydroxy-3-methylpentanoate (2,3-dihydroxy-3-methylvalerate) into 2-oxo-3-methylpentanoate (2-oxo-3-methylvalerate) and of (2R)-2,3-dihydroxy-3-methylbutanoate (2,3-dihydroxyisovalerate) into 2-oxo-3-methylbutanoate (2-oxoisovalerate), the penultimate precursor to L-isoleucine and L-valine, respectively. The protein is Dihydroxy-acid dehydratase of Mycobacterium ulcerans (strain Agy99).